Here is a 121-residue protein sequence, read N- to C-terminus: Large ribosomal subunit protein uL14 (121 aa).

Belongs to the universal ribosomal protein uL14 family. Part of the 50S ribosomal subunit. Forms a cluster with proteins L3 and L19. In the 70S ribosome, L14 and L19 interact and together make contacts with the 16S rRNA in bridges B5 and B8.

Binds to 23S rRNA. Forms part of two intersubunit bridges in the 70S ribosome. The sequence is that of Large ribosomal subunit protein uL14 from Porphyromonas gingivalis (strain ATCC 33277 / DSM 20709 / CIP 103683 / JCM 12257 / NCTC 11834 / 2561).